The following is a 358-amino-acid chain: Plancitoxin-1 (358 aa).

An N-terminal signal peptide occupies residues 1–26 (MPSSVIMFTFLALTVLTAVMVGTSEA). Residue Asn274 is glycosylated (N-linked (GlcNAc...) asparagine). Residue His303 is part of the active site.

The protein belongs to the DNase II family. In terms of assembly, plancitoxin is a heterodimer of alpha and beta subunits; disulfide-linked by a single disulfide bond. In terms of tissue distribution, venom gland.

The protein resides in the secreted. The enzyme catalyses Endonucleolytic cleavage to nucleoside 3'-phosphates and 3'-phosphooligonucleotide end-products.. In terms of biological role, hydrolyzes DNA with an optimum pH of 7.2. Is potently hepatotoxic. It induces caspase-independent apoptosis (on rat liver cells) through the following procedure: binding to a specific receptor in the cytoplasmic membrane, entering the cell, entering the nucleus and degrading DNA. In Acanthaster planci (Crown-of-thorns starfish), this protein is Plancitoxin-1.